Here is a 400-residue protein sequence, read N- to C-terminus: Transcription initiation factor IIF subunit beta (400 aa).

Residues 1–19 (MSSGSAGAPALSNNSTNSV) are compositionally biased toward polar residues. Positions 1 to 47 (MSSGSAGAPALSNNSTNSVAKEKSGNISGDEYLSQEEEVFDGNDIEN) are disordered. 3 positions are modified to phosphoserine: S28, S34, and S56. The span at 33–47 (LSQEEEVFDGNDIEN) shows a compositional bias: acidic residues. Disordered regions lie at residues 165 to 194 (QERE…VMTD) and 366 to 400 (TLGE…EDVV). Basic residues predominate over residues 174-189 (KQQQQKRRNNRKKFNH). The span at 386 to 400 (AEADLEDEIEMEDVV) shows a compositional bias: acidic residues.

Belongs to the TFIIF beta subunit family. As to quaternary structure, TFIIF is composed of three different subunits: TFG1/RAP74, TFG2/RAP30 and TAF14.

The protein resides in the nucleus. Functionally, TFIIF is a general transcription initiation factor that binds to RNA polymerase II. Its functions include the recruitment of RNA polymerase II to the promoter bound DNA-TBP-TFIIB complex, decreasing the affinity of RNA polymerase II for non-specific DNA, allowing for the subsequent recruitment of TFIIE and TFIIH, and facilitating RNA polymerase II elongation. The polypeptide is Transcription initiation factor IIF subunit beta (TFG2) (Saccharomyces cerevisiae (strain ATCC 204508 / S288c) (Baker's yeast)).